The sequence spans 134 residues: Ion transport peptide-like (134 aa).

3 cysteine pairs are disulfide-bonded: C62-C98, C78-C94, and C81-C107.

Belongs to the arthropod CHH/MIH/GIH/VIH hormone family.

It is found in the secreted. This chain is Ion transport peptide-like, found in Schistocerca gregaria (Desert locust).